The primary structure comprises 410 residues: Calsequestrin-2 (410 aa).

An N-terminal signal peptide occupies residues 1–19 (MKRTHLFIAGLYLLASCRA). Residues 221 to 242 (MDEPIAIPDKPYTEEELVEFVK) form a calcium regulated hydrophobic site region. A Phosphotyrosine modification is found at Y282. 2 N-linked (GlcNAc...) asparagine glycosylation sites follow: N335 and N395. The interval 364 to 410 (DVLSGKINTEDDDNEEGDDGDDDEDDDDDDGNNSDEESNDDSDDDDE) is disordered. The span at 373–410 (EDDDNEEGDDGDDDEDDDDDDGNNSDEESNDDSDDDDE) shows a compositional bias: acidic residues. Phosphoserine; by CK2 occurs at positions 397, 401, and 405.

The protein belongs to the calsequestrin family. Interacts with ASPH. Monomer, homodimer and homooligomer. Mostly monomeric in the absence of calcium. Forms higher oligomers in a calcium-dependent manner. Dimers associate to form tetramers, that then form linear homomer chains. Interacts with TRDN. Post-translationally, phosphorylation in the C-terminus, probably by CK2, moderately increases calcium buffering capacity. N-glycosylated. In terms of tissue distribution, detected in heart muscle (at protein level).

It localises to the sarcoplasmic reticulum lumen. In terms of biological role, calsequestrin is a high-capacity, moderate affinity, calcium-binding protein and thus acts as an internal calcium store in muscle. Calcium ions are bound by clusters of acidic residues at the protein surface, especially at the interface between subunits. Can bind around 60 Ca(2+) ions. Regulates the release of lumenal Ca(2+) via the calcium release channel RYR2; this plays an important role in triggering muscle contraction. Plays a role in excitation-contraction coupling in the heart and in regulating the rate of heart beats. The polypeptide is Calsequestrin-2 (CASQ2) (Canis lupus familiaris (Dog)).